Consider the following 109-residue polypeptide: Small ribosomal subunit protein eS25 (109 aa).

Basic and acidic residues predominate over residues Met-1–Ala-13. The interval Met-1 to Glu-34 is disordered.

It belongs to the eukaryotic ribosomal protein eS25 family.

The chain is Small ribosomal subunit protein eS25 (RPS25-1) from Encephalitozoon cuniculi (strain GB-M1) (Microsporidian parasite).